The chain runs to 740 residues: Phosphoribosylformylglycinamidine synthase subunit PurL (740 aa).

The active site involves His53. Positions 56 and 95 each coordinate ATP. Glu97 serves as a coordination point for Mg(2+). Substrate is bound by residues 98–101 and Arg120; that span reads SHNH. The Proton acceptor role is filled by His99. Asp121 is a binding site for Mg(2+). Gln244 serves as a coordination point for substrate. Asp274 provides a ligand contact to Mg(2+). 318 to 320 serves as a coordination point for substrate; that stretch reads ESQ. ATP-binding residues include Asp501 and Gly538. Residue Asn539 participates in Mg(2+) binding. A substrate-binding site is contributed by Ser541.

Belongs to the FGAMS family. As to quaternary structure, monomer. Part of the FGAM synthase complex composed of 1 PurL, 1 PurQ and 2 PurS subunits.

Its subcellular location is the cytoplasm. The catalysed reaction is N(2)-formyl-N(1)-(5-phospho-beta-D-ribosyl)glycinamide + L-glutamine + ATP + H2O = 2-formamido-N(1)-(5-O-phospho-beta-D-ribosyl)acetamidine + L-glutamate + ADP + phosphate + H(+). The protein operates within purine metabolism; IMP biosynthesis via de novo pathway; 5-amino-1-(5-phospho-D-ribosyl)imidazole from N(2)-formyl-N(1)-(5-phospho-D-ribosyl)glycinamide: step 1/2. In terms of biological role, part of the phosphoribosylformylglycinamidine synthase complex involved in the purines biosynthetic pathway. Catalyzes the ATP-dependent conversion of formylglycinamide ribonucleotide (FGAR) and glutamine to yield formylglycinamidine ribonucleotide (FGAM) and glutamate. The FGAM synthase complex is composed of three subunits. PurQ produces an ammonia molecule by converting glutamine to glutamate. PurL transfers the ammonia molecule to FGAR to form FGAM in an ATP-dependent manner. PurS interacts with PurQ and PurL and is thought to assist in the transfer of the ammonia molecule from PurQ to PurL. The chain is Phosphoribosylformylglycinamidine synthase subunit PurL from Lactobacillus delbrueckii subsp. bulgaricus (strain ATCC 11842 / DSM 20081 / BCRC 10696 / JCM 1002 / NBRC 13953 / NCIMB 11778 / NCTC 12712 / WDCM 00102 / Lb 14).